Consider the following 364-residue polypeptide: Alanine racemase (364 aa).

The active-site Proton acceptor; specific for D-alanine is Lys-35. Lys-35 is modified (N6-(pyridoxal phosphate)lysine). A substrate-binding site is contributed by Arg-130. Catalysis depends on Tyr-256, which acts as the Proton acceptor; specific for L-alanine. A substrate-binding site is contributed by Met-304.

The protein belongs to the alanine racemase family. It depends on pyridoxal 5'-phosphate as a cofactor.

It catalyses the reaction L-alanine = D-alanine. It participates in amino-acid biosynthesis; D-alanine biosynthesis; D-alanine from L-alanine: step 1/1. Functionally, catalyzes the interconversion of L-alanine and D-alanine. May also act on other amino acids. This chain is Alanine racemase (alr), found in Polaromonas sp. (strain JS666 / ATCC BAA-500).